A 313-amino-acid polypeptide reads, in one-letter code: Cytochrome f (313 aa).

A signal peptide spans 1–31 (MQNMFSFLSNKKIIALFLIIGTIFMPLSSEA). Heme is bound by residues Tyr-32, Cys-52, Cys-55, and His-56. The helical transmembrane segment at 279 to 298 (IKWLIAFLILSTLGQVFLVL) threads the bilayer.

The protein belongs to the cytochrome f family. The 4 large subunits of the cytochrome b6-f complex are cytochrome b6, subunit IV (17 kDa polypeptide, petD), cytochrome f and the Rieske protein, while the 4 small subunits are PetG, PetL, PetM and PetN. The complex functions as a dimer. The cofactor is heme.

It localises to the plastid. The protein localises to the chloroplast thylakoid membrane. Functionally, component of the cytochrome b6-f complex, which mediates electron transfer between photosystem II (PSII) and photosystem I (PSI), cyclic electron flow around PSI, and state transitions. This Mesostigma viride (Green alga) protein is Cytochrome f (petA).